Consider the following 260-residue polypeptide: tRNA pseudouridine synthase A (260 aa).

Asp51 acts as the Nucleophile in catalysis. Tyr109 provides a ligand contact to substrate.

The protein belongs to the tRNA pseudouridine synthase TruA family. As to quaternary structure, homodimer.

It carries out the reaction uridine(38/39/40) in tRNA = pseudouridine(38/39/40) in tRNA. Its function is as follows. Formation of pseudouridine at positions 38, 39 and 40 in the anticodon stem and loop of transfer RNAs. The sequence is that of tRNA pseudouridine synthase A from Albidiferax ferrireducens (strain ATCC BAA-621 / DSM 15236 / T118) (Rhodoferax ferrireducens).